The primary structure comprises 278 residues: Large ribosomal subunit protein uL2 (278 aa).

Disordered regions lie at residues 1-58 (MAIR…GGGH) and 225-278 (VMNP…KNKR). The span at 37 to 58 (LHGRGGRNAHGRITTRHKGGGH) shows a compositional bias: basic residues. A compositionally biased stretch (basic and acidic residues) spans 253 to 267 (PEGRTRKNKASDKLI). Residues 268 to 278 (VRRRRTGKNKR) show a composition bias toward basic residues.

This sequence belongs to the universal ribosomal protein uL2 family. Part of the 50S ribosomal subunit. Forms a bridge to the 30S subunit in the 70S ribosome.

Functionally, one of the primary rRNA binding proteins. Required for association of the 30S and 50S subunits to form the 70S ribosome, for tRNA binding and peptide bond formation. It has been suggested to have peptidyltransferase activity; this is somewhat controversial. Makes several contacts with the 16S rRNA in the 70S ribosome. This is Large ribosomal subunit protein uL2 from Rhodococcus opacus (strain B4).